The sequence spans 121 residues: Protein yippee-like 5 (121 aa).

The Yippee domain occupies 13–110 (RLFSCANCDT…LERALVRESE (98 aa)). Zn(2+) is bound by residues C17, C20, C73, and C76. Residue S118 is modified to Phosphoserine.

Belongs to the yippee family. In terms of assembly, identified in the CTLH complex that contains GID4, RANBP9 and/or RANBP10, MKLN1, MAEA, RMND5A (or alternatively its paralog RMND5B), GID8, ARMC8, WDR26 and YPEL5. Within this complex, MAEA, RMND5A (or alternatively its paralog RMND5B), GID8, WDR26, and RANBP9 and/or RANBP10 form the catalytic core, while GID4, MKLN1, ARMC8 and YPEL5 have ancillary roles. Interacts with RANBP9 and RANBP10.

Its subcellular location is the nucleus. It is found in the cytoplasm. The protein localises to the cytoskeleton. The protein resides in the microtubule organizing center. It localises to the centrosome. Its subcellular location is the spindle pole. It is found in the midbody. In terms of biological role, component of the CTLH E3 ubiquitin-protein ligase complex that selectively accepts ubiquitin from UBE2H and mediates ubiquitination and subsequent proteasomal degradation of the transcription factor HBP1. Required for normal cell proliferation. The polypeptide is Protein yippee-like 5 (YPEL5) (Bos taurus (Bovine)).